Here is a 566-residue protein sequence, read N- to C-terminus: Urease subunit alpha (566 aa).

In terms of domain architecture, Urease spans 128–566 (GGVDTHIHFI…LPMAQRYFLF (439 aa)). The Ni(2+) site is built by His-133, His-135, and Lys-216. At Lys-216 the chain carries N6-carboxylysine. His-218 is a substrate binding site. 2 residues coordinate Ni(2+): His-245 and His-271. His-319 (proton donor) is an active-site residue. Residue Asp-359 coordinates Ni(2+).

This sequence belongs to the metallo-dependent hydrolases superfamily. Urease alpha subunit family. In terms of assembly, may form a heterohexamer of 3 UreC (alpha) and 3 UreAB (gamma/beta) subunits. May also form a heterotrimer of UreA (gamma), UreB (beta) and UreC (alpha) subunits. Three heterotrimers associate to form the active enzyme. Requires Ni cation as cofactor. Carboxylation allows a single lysine to coordinate two nickel ions.

It is found in the cytoplasm. It carries out the reaction urea + 2 H2O + H(+) = hydrogencarbonate + 2 NH4(+). Its pathway is nitrogen metabolism; urea degradation; CO(2) and NH(3) from urea (urease route): step 1/1. In Pseudomonas syringae pv. tomato (strain ATCC BAA-871 / DC3000), this protein is Urease subunit alpha.